Here is a 276-residue protein sequence, read N- to C-terminus: MLMITSFANPRVAQAFVDYMATQGVILTIQQHNQSDVWLADESQAERVRAELARFLENPADPRYLAASWQAGHTGSGLHYRRYPFFAALRERAGPVTWVMMIACVVVFIAMQILGDQEVMLWLAWPFDPALKFEFWRYFTHALMHFSLMHILFNLLWWWYLGGAVEKRLGSGKLIVITLISALLSGYVQQKFSGPWFGGLSGVVYALMGYVWLRGERDPQSGIYLQRGLIIFALIWIVAGWFDLFGMSMANGAHIAGLAVGLAMAFVDSLNARKRK.

6 helical membrane passes run 94 to 114, 142 to 162, 169 to 189, 192 to 212, 229 to 249, and 250 to 270; these read GPVT…MQIL, ALMH…WYLG, LGSG…GYVQ, FSGP…GYVW, LIIF…GMSM, and ANGA…VDSL. Ser201 functions as the Nucleophile in the catalytic mechanism. His254 is an active-site residue.

The protein belongs to the peptidase S54 family.

Its subcellular location is the cell inner membrane. It catalyses the reaction Cleaves type-1 transmembrane domains using a catalytic dyad composed of serine and histidine that are contributed by different transmembrane domains.. Rhomboid-type serine protease that catalyzes intramembrane proteolysis. This Escherichia coli O157:H7 protein is Rhomboid protease GlpG.